Consider the following 257-residue polypeptide: Beta-fibrinogenase mucrofibrase-4 (257 aa).

A signal peptide spans 1 to 18 (MVLIRVLANLLILQLSYA). A propeptide spanning residues 19 to 24 (QKSSEL) is cleaved from the precursor. A Peptidase S1 domain is found at 25–248 (VIGGDECNIN…HLDWIKGFIA (224 aa)). 6 disulfide bridges follow: C31/C162, C49/C65, C97/C255, C141/C209, C173/C188, and C199/C224. Active-site charge relay system residues include H64 and D109. S203 functions as the Charge relay system in the catalytic mechanism.

This sequence belongs to the peptidase S1 family. Snake venom subfamily. In terms of assembly, monomer. In terms of tissue distribution, expressed by the venom gland.

Its subcellular location is the secreted. In terms of biological role, snake venom serine protease with fibrinogenolytic activities. Cleaves beta-chain of fibrinogen (FGB) efficiently and shows relatively lower activity on alpha-chain. This Protobothrops mucrosquamatus (Taiwan habu) protein is Beta-fibrinogenase mucrofibrase-4.